A 251-amino-acid polypeptide reads, in one-letter code: Exotoxin type A (251 aa).

An N-terminal signal peptide occupies residues 1–30 (MENNKKVLKKMVFFVLVTFLGLTISQEVFA). Residues Cys117 and Cys128 are joined by a disulfide bond.

The protein belongs to the staphylococcal/streptococcal toxin family.

Its function is as follows. Causative agent of the symptoms associated with scarlet fever, have been associated with streptococcal toxic shock-like disease and may play a role in the early events of rheumatic fever. This is Exotoxin type A (speA) from Streptococcus pyogenes serotype M18 (strain MGAS8232).